The following is a 282-amino-acid chain: E3 ubiquitin-protein ligase Siah1 (282 aa).

The tract at residues 1-28 is disordered; that stretch reads MSRQTATALPTGTSKCPPSQRVPTLSGT. The RING-type zinc-finger motif lies at 41-76; the sequence is CPVCFDYVLPPILQCQSGHLVCSNCRPKLTCCPTCR. The interval 90-282 is SBD; that stretch reads VANSVLFPCK…LGINVTISMC (193 aa). Residues 93–153 form an SIAH-type zinc finger; the sequence is SVLFPCKYAS…VMPHLLHQHK (61 aa). The Zn(2+) site is built by Cys98, Cys105, His117, Cys121, Cys128, Cys135, His147, and His152.

The protein belongs to the SINA (Seven in absentia) family. In terms of assembly, homodimer.

The enzyme catalyses S-ubiquitinyl-[E2 ubiquitin-conjugating enzyme]-L-cysteine + [acceptor protein]-L-lysine = [E2 ubiquitin-conjugating enzyme]-L-cysteine + N(6)-ubiquitinyl-[acceptor protein]-L-lysine.. It functions in the pathway protein modification; protein ubiquitination. Functionally, E3 ubiquitin-protein ligase that mediates ubiquitination and subsequent proteasomal degradation of target proteins. E3 ubiquitin ligases accept ubiquitin from an E2 ubiquitin-conjugating enzyme in the form of a thioester and then directly transfers the ubiquitin to targeted substrates. It probably triggers the ubiquitin-mediated degradation of different substrates. The polypeptide is E3 ubiquitin-protein ligase Siah1 (siah1) (Danio rerio (Zebrafish)).